The chain runs to 174 residues: Caltractin ICL1e (174 aa).

The segment at 1–33 (MSKKQQAPVAQKPVGKQQQVNRKPQDRPGLTED) is disordered. 4 consecutive EF-hand domains span residues 33 to 68 (DEIE…LGFD), 88 to 103 (IDFD…KLGN), 105 to 140 (ESRD…LGET), and 141 to 174 (MTAE…KRTF).

This sequence belongs to the centrin family. Monomer.

Its subcellular location is the cytoplasm. It localises to the cytoskeleton. Its function is as follows. Plays a fundamental role in microtubule organizing center structure and function. Component of the infraciliary lattice (ICL) and the ciliary basal bodies. In Paramecium tetraurelia, this protein is Caltractin ICL1e (Icl1e).